A 226-amino-acid polypeptide reads, in one-letter code: Biosynthetic peptidoglycan transglycosylase (226 aa).

Residues 8 to 28 traverse the membrane as a helical segment; that stretch reads FFGWTWFVMWRFLLLLALLLL.

The protein belongs to the glycosyltransferase 51 family.

The protein localises to the cell inner membrane. The catalysed reaction is [GlcNAc-(1-&gt;4)-Mur2Ac(oyl-L-Ala-gamma-D-Glu-L-Lys-D-Ala-D-Ala)](n)-di-trans,octa-cis-undecaprenyl diphosphate + beta-D-GlcNAc-(1-&gt;4)-Mur2Ac(oyl-L-Ala-gamma-D-Glu-L-Lys-D-Ala-D-Ala)-di-trans,octa-cis-undecaprenyl diphosphate = [GlcNAc-(1-&gt;4)-Mur2Ac(oyl-L-Ala-gamma-D-Glu-L-Lys-D-Ala-D-Ala)](n+1)-di-trans,octa-cis-undecaprenyl diphosphate + di-trans,octa-cis-undecaprenyl diphosphate + H(+). Its pathway is cell wall biogenesis; peptidoglycan biosynthesis. Functionally, peptidoglycan polymerase that catalyzes glycan chain elongation from lipid-linked precursors. In Shewanella frigidimarina (strain NCIMB 400), this protein is Biosynthetic peptidoglycan transglycosylase.